The primary structure comprises 294 residues: Proteasome subunit beta (294 aa).

The propeptide at 1 to 65 (MTADRPALRT…MESGDLAPHG (65 aa)) is removed in mature form; by autocatalysis. Residue Thr66 is the Nucleophile of the active site.

It belongs to the peptidase T1B family. In terms of assembly, the 20S proteasome core is composed of 14 alpha and 14 beta subunits that assemble into four stacked heptameric rings, resulting in a barrel-shaped structure. The two inner rings, each composed of seven catalytic beta subunits, are sandwiched by two outer rings, each composed of seven alpha subunits. The catalytic chamber with the active sites is on the inside of the barrel. Has a gated structure, the ends of the cylinder being occluded by the N-termini of the alpha-subunits. Is capped by the proteasome-associated ATPase, ARC.

It localises to the cytoplasm. The enzyme catalyses Cleavage of peptide bonds with very broad specificity.. It participates in protein degradation; proteasomal Pup-dependent pathway. With respect to regulation, the formation of the proteasomal ATPase ARC-20S proteasome complex, likely via the docking of the C-termini of ARC into the intersubunit pockets in the alpha-rings, may trigger opening of the gate for substrate entry. Interconversion between the open-gate and close-gate conformations leads to a dynamic regulation of the 20S proteasome proteolysis activity. Its function is as follows. Component of the proteasome core, a large protease complex with broad specificity involved in protein degradation. The protein is Proteasome subunit beta of Rhodococcus jostii (strain RHA1).